We begin with the raw amino-acid sequence, 133 residues long: Nickel-responsive regulator (133 aa).

Residues His-76, His-87, His-89, and Cys-95 each coordinate Ni(2+).

This sequence belongs to the transcriptional regulatory CopG/NikR family. In terms of assembly, homotetramer. The cofactor is Ni(2+).

Functionally, transcriptional repressor of the nikABCDE operon. Is active in the presence of excessive concentrations of intracellular nickel. In Salmonella arizonae (strain ATCC BAA-731 / CDC346-86 / RSK2980), this protein is Nickel-responsive regulator.